The sequence spans 199 residues: MQYPEPIAQLIDGYMKLPGIGQKSATRLAFFTIDMAEDDVTAFSKALIAAKRDLHFCSICGNITEGDPCSICADKTRDQTHVLVVEQPKDIMVMEKMKEYHGLYHVLHGVMSPIEGKGPEDLNIASLINRLQQNPNIKEVIIATNATPEGEATAMYLSRLIKPAGIKVTRLAHGLSVGSDIEYADEMTLFKAVEGRTEM.

Residues 57–72 (CSICGNITEGDPCSIC) form a C4-type zinc finger. Residues 80–176 (THVLVVEQPK…KVTRLAHGLS (97 aa)) enclose the Toprim domain.

It belongs to the RecR family.

Functionally, may play a role in DNA repair. It seems to be involved in an RecBC-independent recombinational process of DNA repair. It may act with RecF and RecO. This chain is Recombination protein RecR, found in Levilactobacillus brevis (strain ATCC 367 / BCRC 12310 / CIP 105137 / JCM 1170 / LMG 11437 / NCIMB 947 / NCTC 947) (Lactobacillus brevis).